Reading from the N-terminus, the 123-residue chain is MIFNIGIDIVEVERFKNIKRFDSFLKRVFTQKELEYIRSKNFNMLTIAGYFAAKEAVAKALSTGIVFGFKDIEIQKDTNGCPKVKLYNRAKEICENLKITNIVLSISHQNSVAVACAIAEKEE.

Positions 8 and 55 each coordinate Mg(2+).

Belongs to the P-Pant transferase superfamily. AcpS family. It depends on Mg(2+) as a cofactor.

It localises to the cytoplasm. The catalysed reaction is apo-[ACP] + CoA = holo-[ACP] + adenosine 3',5'-bisphosphate + H(+). In terms of biological role, transfers the 4'-phosphopantetheine moiety from coenzyme A to a Ser of acyl-carrier-protein. The polypeptide is Holo-[acyl-carrier-protein] synthase (Caldicellulosiruptor saccharolyticus (strain ATCC 43494 / DSM 8903 / Tp8T 6331)).